A 364-amino-acid polypeptide reads, in one-letter code: NAC transcription factor 56 (364 aa).

The disordered stretch occupies residues 1–23; that stretch reads MESTDSSGGPPPPQPNLPPGFRF. Residues 9–18 are compositionally biased toward pro residues; it reads GPPPPQPNLP. The NAC domain occupies 17–178; sequence LPPGFRFHPT…DWVLCRIYKK (162 aa). Residues 116–184 mediate DNA binding; that stretch reads VGVKKALVFY…IYKKNNASRH (69 aa).

Stamen specific, in anthers from stage 8. Expressed in the outer integument, but seems not expressed in the embryo at the torpedo stage.

It is found in the nucleus. Its function is as follows. Transcription factor of the NAC family. Together with NAC018/NARS2, regulates embryogenesis by regulating the development and degeneration of ovule integuments, a process required for intertissue communication between the embryo and the maternal integument. The sequence is that of NAC transcription factor 56 from Arabidopsis thaliana (Mouse-ear cress).